A 259-amino-acid polypeptide reads, in one-letter code: Adenosylcobinamide-GDP ribazoletransferase (259 aa).

The next 6 membrane-spanning stretches (helical) occupy residues 37–57 (ASRY…LVYS), 58–78 (VMLH…ASVL), 118–138 (ALAL…LALF), 143–163 (VSLA…SFIF), 195–215 (AAIS…LGLL), and 237–257 (LGAT…IVGA).

It belongs to the CobS family. The cofactor is Mg(2+).

Its subcellular location is the cell inner membrane. It catalyses the reaction alpha-ribazole + adenosylcob(III)inamide-GDP = adenosylcob(III)alamin + GMP + H(+). The enzyme catalyses alpha-ribazole 5'-phosphate + adenosylcob(III)inamide-GDP = adenosylcob(III)alamin 5'-phosphate + GMP + H(+). Its pathway is cofactor biosynthesis; adenosylcobalamin biosynthesis; adenosylcobalamin from cob(II)yrinate a,c-diamide: step 7/7. Its function is as follows. Joins adenosylcobinamide-GDP and alpha-ribazole to generate adenosylcobalamin (Ado-cobalamin). Also synthesizes adenosylcobalamin 5'-phosphate from adenosylcobinamide-GDP and alpha-ribazole 5'-phosphate. In Shewanella piezotolerans (strain WP3 / JCM 13877), this protein is Adenosylcobinamide-GDP ribazoletransferase.